The following is a 960-amino-acid chain: Probable glutamyl endopeptidase, chloroplastic (960 aa).

Residues 1–62 constitute a chloroplast transit peptide; it reads MMRFHKACHR…FSENPLTTVM (62 aa). The tract at residues 78-98 is disordered; that stretch reads SGGAEDGGGTSNGSLSASATA. Over residues 89–98 the composition is skewed to polar residues; it reads NGSLSASATA. Catalysis depends on charge relay system residues Ser-780, Asp-854, and His-888. The tract at residues 915–960 is disordered; it reads TSDADTSPDQSKEGSDSADKVSTGTGGGNPEFGEHEVHSKLRRSLL. The span at 924 to 933 shows a compositional bias: basic and acidic residues; sequence QSKEGSDSAD.

It belongs to the peptidase S9D family.

Its subcellular location is the plastid. It is found in the chloroplast stroma. In terms of biological role, serine-type protease active in vitro against the LHCII N-terminal. Cleaves its substrate on the carboxy-side of Glu residues. This is Probable glutamyl endopeptidase, chloroplastic (GEP) from Arabidopsis thaliana (Mouse-ear cress).